A 147-amino-acid polypeptide reads, in one-letter code: uncharacterized protein (147 aa).

2 helical membrane passes run W42–P62 and L64–F84.

It localises to the cell membrane. This is an uncharacterized protein from Bacillus subtilis (strain 168).